Here is a 318-residue protein sequence, read N- to C-terminus: Mediator of RNA polymerase II transcription subunit 3 (318 aa).

The span at S134–T156 shows a compositional bias: polar residues. The tract at residues S134–Q225 is disordered. Over residues H192–S217 the composition is skewed to low complexity.

This sequence belongs to the Mediator complex subunit 3 family. In terms of assembly, component of the Mediator complex.

It localises to the nucleus. In terms of biological role, component of the Mediator complex, a coactivator involved in regulated gene transcription of nearly all RNA polymerase II-dependent genes. Mediator functions as a bridge to convey information from gene-specific regulatory proteins to the basal RNA polymerase II transcription machinery. Mediator is recruited to promoters by direct interactions with regulatory proteins and serves as a scaffold for the assembly of a functional preinitiation complex with RNA polymerase II and the general transcription factors. The protein is Mediator of RNA polymerase II transcription subunit 3 (PGD1) of Kluyveromyces lactis (strain ATCC 8585 / CBS 2359 / DSM 70799 / NBRC 1267 / NRRL Y-1140 / WM37) (Yeast).